Here is a 517-residue protein sequence, read N- to C-terminus: NAD(P)H-quinone oxidoreductase subunit 2 (517 aa).

The next 14 helical transmembrane spans lie at 16–36, 43–63, 80–100, 110–130, 133–153, 168–188, 211–231, 245–265, 279–299, 307–327, 335–355, 379–399, 401–421, and 467–487; these read ILPEGIVIITLVGVLVGDLIF, WLPYMAIIGLLASIVALYLAW, LSIVFRAIIALSTAVTILMSI, LAEFIAIMLTATLGGMFLCGA, LVMIFISLEMLSISSYLMTGY, LLIGASSSAIFLYGVSLLYGL, LGLAIALVFVIAGIAFKISAV, PTPVVAFLSVGSKAAGFALAI, WHFVFTALAILSMVLGNVVAL, MLAYSSIGQAGFVMIGLVAGT, VFYLLVYLFMNLGAFACIILF, LALSICLLSLGGIPPLAGFFG, IYLFWAGWQAELYGLVILGLV, and VGIVLTLIATSLAGILSNPLF.

This sequence belongs to the complex I subunit 2 family. In terms of assembly, NDH-1 can be composed of about 15 different subunits; different subcomplexes with different compositions have been identified which probably have different functions.

The protein resides in the cellular thylakoid membrane. The enzyme catalyses a plastoquinone + NADH + (n+1) H(+)(in) = a plastoquinol + NAD(+) + n H(+)(out). It carries out the reaction a plastoquinone + NADPH + (n+1) H(+)(in) = a plastoquinol + NADP(+) + n H(+)(out). In terms of biological role, NDH-1 shuttles electrons from an unknown electron donor, via FMN and iron-sulfur (Fe-S) centers, to quinones in the respiratory and/or the photosynthetic chain. The immediate electron acceptor for the enzyme in this species is believed to be plastoquinone. Couples the redox reaction to proton translocation, and thus conserves the redox energy in a proton gradient. Cyanobacterial NDH-1 also plays a role in inorganic carbon-concentration. This chain is NAD(P)H-quinone oxidoreductase subunit 2, found in Rippkaea orientalis (strain PCC 8801 / RF-1) (Cyanothece sp. (strain PCC 8801)).